The following is a 470-amino-acid chain: Cupincin (470 aa).

Residues 1 to 34 form the signal peptide; it reads MAKKKTSSSMARSQLAALLISLCFLSLASNAVGW. Residues 36–52 show a composition bias toward basic and acidic residues; the sequence is RRGEREEEDERRRHGGE. 2 disordered regions span residues 36–57 and 240–261; these read RRGEREEEDERRRHGGEGGRPY and KSCSRGGGGGSGSEWEIKPSSL. Cupin type-1 domains lie at 57-215 and 259-445; these read YHFG…EELE and SSLT…AREA. A glycan (N-linked (GlcNAc...) asparagine) is linked at N297. A disordered region spans residues 330–368; it reads PHVSGGGSSERREREREHGRRREEEQGEEEHGERGEKAR. Over residues 338–367 the composition is skewed to basic and acidic residues; that stretch reads SERREREREHGRRREEEQGEEEHGERGEKA. 3 residues coordinate Zn(2+): H347, E352, and H360.

Belongs to the 7S seed storage protein family. As to quaternary structure, homotrimer. Zn(2+) is required as a cofactor.

The protein resides in the secreted. Functionally, seed storage protein. Globulin-like protein that acts as a zinc metalloprotease. Cleaves specifically between Leu-15 and Tyr-16 of insulin B chain, and Gln-1 and Leu-2 of neurotensin (NT) peptide in vitro. May play a role as an initiating endopeptidase in germinating seeds. This chain is Cupincin, found in Oryza sativa subsp. indica (Rice).